The following is a 273-amino-acid chain: Large ribosomal subunit protein uL2c (273 aa).

Disordered regions lie at residues 30–55 (EKKLTRGWSRAQGRNNKGRITTRHRG) and 222–243 (GSAMNPVDHPHGGGEGKAPIGR). Residues 45 to 55 (NKGRITTRHRG) are compositionally biased toward basic residues.

It belongs to the universal ribosomal protein uL2 family. In terms of assembly, part of the 50S ribosomal subunit.

The protein resides in the plastid. The sequence is that of Large ribosomal subunit protein uL2c (rpl2) from Prototheca wickerhamii.